The chain runs to 79 residues: uncharacterized protein (79 aa).

This is an uncharacterized protein from Dryophytes versicolor (chameleon treefrog).